The chain runs to 453 residues: Protein IVY1 (453 aa).

Positions 1–16 (MPDNNTEQLQGSPSSD) are enriched in polar residues. Residues 1–20 (MPDNNTEQLQGSPSSDQRLR) are disordered. Residues Ser-59, Ser-84, and Ser-85 each carry the phosphoserine modification. Coiled coils occupy residues 102-122 (KRDV…SNAY) and 230-257 (IRNL…KHDF). 2 disordered regions span residues 316 to 340 (DGPY…EETG) and 353 to 453 (TSQP…SSNI). A Phosphoserine modification is found at Ser-335. Over residues 353-371 (TSQPSTSKTSLPKSKGSST) the composition is skewed to low complexity. 2 stretches are compositionally biased toward polar residues: residues 372-384 (VSTP…SSNK) and 404-429 (LMGT…TFKQ). Residues 431–442 (SIKEDNDNHSSD) show a composition bias toward basic and acidic residues. Over residues 443 to 453 (TDGMQDQSSNI) the composition is skewed to polar residues.

In terms of assembly, homomultimer. Interacts with YPT7 and VPS33.

It localises to the vacuole membrane. Its function is as follows. May be required for vacuolar fusion. Overexpression leads to fragmentation of vacuoles, missorting of the vacuolar enzyme carboxypeptidase Y (CPY) to the exterior of the cell and accumulation of multivesicular bodies inside the cell. The sequence is that of Protein IVY1 (IVY1) from Saccharomyces cerevisiae (strain ATCC 204508 / S288c) (Baker's yeast).